The sequence spans 62 residues: Synergistic-type venom protein S2C4 (62 aa).

3 disulfide bridges follow: Cys-3–Cys-24, Cys-17–Cys-42, and Cys-46–Cys-57.

It belongs to the three-finger toxin family. Short-chain subfamily. Aminergic toxin sub-subfamily. In terms of assembly, homodimer; disulfide-linked. As to expression, expressed by the venom gland.

The protein resides in the secreted. In terms of biological role, this protein shows a synergetic toxic effect in that it enhances the toxicity of other toxins. This chain is Synergistic-type venom protein S2C4, found in Dendroaspis jamesoni kaimosae (Eastern Jameson's mamba).